The primary structure comprises 221 residues: MTREEALLWLDQHIGISRETVEKLDAFVACLHAEMAHQNLIARSTVDDLWGRHIIDSAQLLPLARKEAAFNKKASPKSWLDLGSGAGFPGIIIAILSEMAVTLVESRRKRVEFLEKAAEAAGTPVTILGQRLENIEPQAFDIITARAFAPLDKLWRLAFPFSHNESLWLLPKGQNARTELEETRKLWQGDTRIEGSVTDPQSAIIVATHIHPKKQKTGKKT.

S-adenosyl-L-methionine-binding positions include Gly-83, Phe-88, 132–133, and Arg-146; that span reads LE.

It belongs to the methyltransferase superfamily. RNA methyltransferase RsmG family.

The protein resides in the cytoplasm. The catalysed reaction is guanosine(527) in 16S rRNA + S-adenosyl-L-methionine = N(7)-methylguanosine(527) in 16S rRNA + S-adenosyl-L-homocysteine. Specifically methylates the N7 position of guanine in position 527 of 16S rRNA. In Zymomonas mobilis subsp. mobilis (strain ATCC 31821 / ZM4 / CP4), this protein is Ribosomal RNA small subunit methyltransferase G.